The following is a 505-amino-acid chain: Cyanidin 3-O-glucoside 7-O-glucosyltransferase (acyl-glucose) (505 aa).

Residues Met1–Ala25 form the signal peptide. Residues Gln52, His152, and Asn197 to Glu198 each bind a beta-D-glucoside. The active-site Proton donor is the Glu198. Residues Cys217 and Cys225 are joined by a disulfide bond. Asn224, Asn229, and Asn324 each carry an N-linked (GlcNAc...) asparagine glycan. A beta-D-glucoside-binding residues include Tyr341 and Glu403. Glu403 (nucleophile) is an active-site residue. N-linked (GlcNAc...) asparagine glycosylation is found at Asn411 and Asn437. Positions 447 and 463 each coordinate a beta-D-glucoside. An N-linked (GlcNAc...) asparagine glycan is attached at Asn494.

It belongs to the glycosyl hydrolase 1 family.

Its subcellular location is the vacuole. The enzyme catalyses 1-O-(4-hydroxy-3-methoxybenzoyl)-beta-D-glucose + cyanidin 3-O-beta-D-glucoside = cyanidin 3,7-di-O-beta-D-glucoside + vanillate. The protein operates within pigment biosynthesis; anthocyanin biosynthesis. Its function is as follows. Beta-glycosidase that catalyzes the transfer of glucose moiety to anthocyanidin 3-glucoside at the 7 position. Anthocyanins are ubiquitous colored pigments that are responsible for variations in petal color. The protein is Cyanidin 3-O-glucoside 7-O-glucosyltransferase (acyl-glucose) (AA7GT) of Delphinium grandiflorum (Siberian larkspur).